A 469-amino-acid polypeptide reads, in one-letter code: RuvB-like helicase 2 (469 aa).

74 to 81 (GPPSTGKT) is a binding site for ATP.

This sequence belongs to the RuvB family. In terms of assembly, may form heterododecamers with RVB1. Component of the SWR1 chromatin remodeling complex, the INO80 chromatin remodeling complex, and of the R2TP complex.

Its subcellular location is the nucleus. It carries out the reaction ATP + H2O = ADP + phosphate + H(+). In terms of biological role, DNA helicase which participates in several chromatin remodeling complexes, including the SWR1 and the INO80 complexes. The SWR1 complex mediates the ATP-dependent exchange of histone H2A for the H2A variant HZT1 leading to transcriptional regulation of selected genes by chromatin remodeling. The INO80 complex remodels chromatin by shifting nucleosomes and is involved in DNA repair. Also involved in pre-rRNA processing. The chain is RuvB-like helicase 2 (RVB2) from Eremothecium gossypii (strain ATCC 10895 / CBS 109.51 / FGSC 9923 / NRRL Y-1056) (Yeast).